Here is a 725-residue protein sequence, read N- to C-terminus: Lipoamidase (725 aa).

Residues 1-52 form a disordered region; sequence MLAQESILETTVQTETESVTTETSQTVANLESETTSQTVMQEKESSSAIAES. Residues 9–27 show a composition bias toward low complexity; the sequence is ETTVQTETESVTTETSQTV. Over residues 28 to 40 the composition is skewed to polar residues; that stretch reads ANLESETTSQTVM. Active-site charge relay system residues include Lys-159 and Ser-235. Ser-259 (acyl-ester intermediate) is an active-site residue. The tract at residues 551–686 is disordered; that stretch reads KINQPHVEEP…NKSMIGKQEQ (136 aa). The span at 556 to 637 shows a compositional bias: basic and acidic residues; it reads HVEEPDKDKE…TSEGPIEGKD (82 aa). Low complexity predominate over residues 650–661; that stretch reads SGSSLDNSLNSS. A compositionally biased stretch (polar residues) spans 662–679; it reads ANQGTKSTESTHAFSNKS. A helical membrane pass occupies residues 700–720; that stretch reads PSTFWIVLGGAFLVTSGTIYI.

It belongs to the amidase family. Homodimer in solution.

The protein localises to the cell membrane. It catalyses the reaction N(6)-[(R)-lipoyl]-L-lysyl-[lipoyl-carrier protein] + H2O = L-lysyl-[lipoyl-carrier protein] + (R)-lipoate. Its activity is regulated as follows. Lipoamidase activity is slightly inhibited by p-chloromercuribenzoate. Functionally, amidohydrolase that releases lipoic acid from the protein-bound form. Cleaves the amide bond that links lipoic acid to the lipoylated lysine epsilon-amino groups, leading to the formation of free lipoic acid plus the unmodified protein. Shows activity toward both high molecular weight protein substrates such as a lipoyl domain and intact 2-oxoacid dehydrogenases as well as small molecule substrates such as lipoyl-lysine. Also acts on small biotinylated substrates. Hydrolyzes the synthetic substrates methyl lipoate and lipoamide. The physiologically important substrates are probably lipoyl-lysine and small peptides containing lipoyl-lysine. Lpa seems likely to enable this bacterium to utilize amide-linked forms of lipoic acid that otherwise could not be assimilated. The polypeptide is Lipoamidase (Enterococcus faecalis (Streptococcus faecalis)).